A 587-amino-acid chain; its full sequence is V-type proton ATPase catalytic subunit A (587 aa).

Residue 243 to 250 (GAFGCGKT) coordinates ATP.

Belongs to the ATPase alpha/beta chains family. In terms of assembly, V-ATPase is a heteromultimeric enzyme composed of a peripheral catalytic V1 complex (main components: subunits A, B, C, D, E, and F) attached to an integral membrane V0 proton pore complex (main component: the proteolipid protein).

It carries out the reaction ATP + H2O + 4 H(+)(in) = ADP + phosphate + 5 H(+)(out). Catalytic subunit of the peripheral V1 complex of vacuolar ATPase. V-ATPase vacuolar ATPase is responsible for acidifying a variety of intracellular compartments in eukaryotic cells. The sequence is that of V-type proton ATPase catalytic subunit A from Cyanidium caldarium (Red alga).